The chain runs to 455 residues: Ribulose bisphosphate carboxylase large chain (455 aa).

K5 is modified (N6,N6,N6-trimethyllysine). 2 residues coordinate substrate: N114 and T164. The active-site Proton acceptor is K166. K168 is a substrate binding site. 3 residues coordinate Mg(2+): K192, D194, and E195. K192 is modified (N6-carboxylysine). The active-site Proton acceptor is H285. Substrate contacts are provided by R286, H318, and S370.

It belongs to the RuBisCO large chain family. Type I subfamily. In terms of assembly, heterohexadecamer of 8 large chains and 8 small chains; disulfide-linked. The disulfide link is formed within the large subunit homodimers. Mg(2+) is required as a cofactor. Post-translationally, the disulfide bond which can form in the large chain dimeric partners within the hexadecamer appears to be associated with oxidative stress and protein turnover.

It is found in the plastid. It localises to the chloroplast. The catalysed reaction is 2 (2R)-3-phosphoglycerate + 2 H(+) = D-ribulose 1,5-bisphosphate + CO2 + H2O. The enzyme catalyses D-ribulose 1,5-bisphosphate + O2 = 2-phosphoglycolate + (2R)-3-phosphoglycerate + 2 H(+). RuBisCO catalyzes two reactions: the carboxylation of D-ribulose 1,5-bisphosphate, the primary event in carbon dioxide fixation, as well as the oxidative fragmentation of the pentose substrate in the photorespiration process. Both reactions occur simultaneously and in competition at the same active site. The chain is Ribulose bisphosphate carboxylase large chain from Lupinus arcticus (Arctic lupine).